The chain runs to 356 residues: Putative transposase y4zB (356 aa).

Low complexity predominate over residues 1 to 19 (MITTGTPTTRRSAAGTAGA). 2 disordered regions span residues 1–54 (MITT…PLAD) and 334–356 (PPPVNPSHRRPRCSPHQMSFAYV).

The protein belongs to the transposase 11 family.

The protein is Putative transposase y4zB of Sinorhizobium fredii (strain NBRC 101917 / NGR234).